Consider the following 112-residue polypeptide: ATP synthase epsilon chain (112 aa).

The protein belongs to the ATPase epsilon chain family. In terms of assembly, F-type ATPases have 2 components, CF(1) - the catalytic core - and CF(0) - the membrane proton channel. CF(1) has five subunits: alpha(3), beta(3), gamma(1), delta(1), epsilon(1). CF(0) has three main subunits: a, b and c.

The protein localises to the cell inner membrane. In terms of biological role, produces ATP from ADP in the presence of a proton gradient across the membrane. The chain is ATP synthase epsilon chain (atpC) from Rickettsia conorii (strain ATCC VR-613 / Malish 7).